A 130-amino-acid chain; its full sequence is Protein ApaG (130 aa).

Residues 3-127 (RAVTRRIEVT…FSLDSPEGKR (125 aa)) enclose the ApaG domain.

This Rhodopseudomonas palustris (strain ATCC BAA-98 / CGA009) protein is Protein ApaG.